Reading from the N-terminus, the 92-residue chain is Exodeoxyribonuclease 7 small subunit (92 aa).

Positions 71–84 (AESAGTAKSAVAAD) are enriched in low complexity. A disordered region spans residues 71–92 (AESAGTAKSAVAADSRGAADSA).

It belongs to the XseB family. As to quaternary structure, heterooligomer composed of large and small subunits.

It is found in the cytoplasm. The catalysed reaction is Exonucleolytic cleavage in either 5'- to 3'- or 3'- to 5'-direction to yield nucleoside 5'-phosphates.. Functionally, bidirectionally degrades single-stranded DNA into large acid-insoluble oligonucleotides, which are then degraded further into small acid-soluble oligonucleotides. The sequence is that of Exodeoxyribonuclease 7 small subunit from Leifsonia xyli subsp. xyli (strain CTCB07).